The chain runs to 98 residues: NADH-ubiquinone oxidoreductase chain 4L (98 aa).

3 consecutive transmembrane segments (helical) span residues 1 to 21 (MSMV…GLLM), 29 to 49 (SLLC…VTIL), and 61 to 81 (IILL…LVMV).

This sequence belongs to the complex I subunit 4L family. As to quaternary structure, core subunit of respiratory chain NADH dehydrogenase (Complex I) which is composed of 45 different subunits.

The protein resides in the mitochondrion inner membrane. It carries out the reaction a ubiquinone + NADH + 5 H(+)(in) = a ubiquinol + NAD(+) + 4 H(+)(out). Functionally, core subunit of the mitochondrial membrane respiratory chain NADH dehydrogenase (Complex I) which catalyzes electron transfer from NADH through the respiratory chain, using ubiquinone as an electron acceptor. Part of the enzyme membrane arm which is embedded in the lipid bilayer and involved in proton translocation. In Halichoerus grypus (Gray seal), this protein is NADH-ubiquinone oxidoreductase chain 4L (MT-ND4L).